Consider the following 291-residue polypeptide: uncharacterized protein (291 aa).

The HTH tetR-type domain occupies 2-62 (KEKEKLIIET…SMLNYYYDKT (61 aa)). The H-T-H motif DNA-binding region spans 25-44 (SVQEIAKECKISKGAFYIYF).

This is an uncharacterized protein from Bacillus subtilis (strain 168).